The following is a 364-amino-acid chain: tRNA 2-selenouridine synthase (364 aa).

The 124-residue stretch at 14–137 (LLADTPLIDV…LRQTAIQATW (124 aa)) folds into the Rhodanese domain. The active-site S-selanylcysteine intermediate is the C97.

Belongs to the SelU family. As to quaternary structure, monomer.

The enzyme catalyses 5-methylaminomethyl-2-thiouridine(34) in tRNA + selenophosphate + (2E)-geranyl diphosphate + H2O + H(+) = 5-methylaminomethyl-2-selenouridine(34) in tRNA + (2E)-thiogeraniol + phosphate + diphosphate. It catalyses the reaction 5-methylaminomethyl-2-thiouridine(34) in tRNA + (2E)-geranyl diphosphate = 5-methylaminomethyl-S-(2E)-geranyl-thiouridine(34) in tRNA + diphosphate. It carries out the reaction 5-methylaminomethyl-S-(2E)-geranyl-thiouridine(34) in tRNA + selenophosphate + H(+) = 5-methylaminomethyl-2-(Se-phospho)selenouridine(34) in tRNA + (2E)-thiogeraniol. The catalysed reaction is 5-methylaminomethyl-2-(Se-phospho)selenouridine(34) in tRNA + H2O = 5-methylaminomethyl-2-selenouridine(34) in tRNA + phosphate. In terms of biological role, involved in the post-transcriptional modification of the uridine at the wobble position (U34) of tRNA(Lys), tRNA(Glu) and tRNA(Gln). Catalyzes the conversion of 2-thiouridine (S2U-RNA) to 2-selenouridine (Se2U-RNA). Acts in a two-step process involving geranylation of 2-thiouridine (S2U) to S-geranyl-2-thiouridine (geS2U) and subsequent selenation of the latter derivative to 2-selenouridine (Se2U) in the tRNA chain. This is tRNA 2-selenouridine synthase from Salmonella paratyphi A (strain ATCC 9150 / SARB42).